Here is a 370-residue protein sequence, read N- to C-terminus: DNA replication and repair protein RecF (370 aa).

30–37 is an ATP binding site; that stretch reads GDNGSGKT.

Belongs to the RecF family.

The protein resides in the cytoplasm. Functionally, the RecF protein is involved in DNA metabolism; it is required for DNA replication and normal SOS inducibility. RecF binds preferentially to single-stranded, linear DNA. It also seems to bind ATP. This chain is DNA replication and repair protein RecF, found in Stutzerimonas stutzeri (strain A1501) (Pseudomonas stutzeri).